The sequence spans 128 residues: Large ribosomal subunit protein bL19 (128 aa).

It belongs to the bacterial ribosomal protein bL19 family.

Functionally, this protein is located at the 30S-50S ribosomal subunit interface and may play a role in the structure and function of the aminoacyl-tRNA binding site. In Ralstonia nicotianae (strain ATCC BAA-1114 / GMI1000) (Ralstonia solanacearum), this protein is Large ribosomal subunit protein bL19.